A 556-amino-acid chain; its full sequence is Protein trichome birefringence-like 1 (556 aa).

Residues 38-58 traverse the membrane as a helical; Signal-anchor for type II membrane protein segment; the sequence is TFVYAFVVTFVALTVFLAFSP. Positions 269-271 match the GDS motif motif; it reads GDS. The DCXHWCLPGXXDXWN motif signature appears at 514–528; sequence DCSHWCLPGVPDSWN.

This sequence belongs to the PC-esterase family. TBL subfamily. In terms of tissue distribution, not expressed in trichomes.

It localises to the membrane. Can complement TBR and is therefore functionally equivalent, but may work in different tissue. May act as a bridging protein that binds pectin and other cell wall polysaccharides. Probably involved in maintaining esterification of pectins. May be involved in the specific O-acetylation of cell wall polymers. This Arabidopsis thaliana (Mouse-ear cress) protein is Protein trichome birefringence-like 1 (TBL1).